A 365-amino-acid polypeptide reads, in one-letter code: Putative chalcone synthase (365 aa).

Cysteine 144 is a catalytic residue.

Belongs to the thiolase-like superfamily. Chalcone/stilbene synthases family.

The catalysed reaction is (E)-4-coumaroyl-CoA + 3 malonyl-CoA + 3 H(+) = 2',4,4',6'-tetrahydroxychalcone + 3 CO2 + 4 CoA. This Bacillus subtilis (strain 168) protein is Putative chalcone synthase (bcsA).